The chain runs to 718 residues: Catalase-peroxidase 1 (718 aa).

Positions 93 to 221 (WHSAGTYRIA…LAAVMMGLIY (129 aa)) form a cross-link, tryptophyl-tyrosyl-methioninium (Trp-Tyr) (with M-247). The Proton acceptor role is filled by histidine 94. A cross-link (tryptophyl-tyrosyl-methioninium (Tyr-Met) (with W-93)) is located at residues 221–247 (YVNPEGVDGNPDPLKTAQDMRVTFARM). Histidine 262 serves as a coordination point for heme b.

The protein belongs to the peroxidase family. Peroxidase/catalase subfamily. In terms of assembly, homodimer or homotetramer. The cofactor is heme b. Post-translationally, formation of the three residue Trp-Tyr-Met cross-link is important for the catalase, but not the peroxidase activity of the enzyme.

It carries out the reaction H2O2 + AH2 = A + 2 H2O. The enzyme catalyses 2 H2O2 = O2 + 2 H2O. Functionally, bifunctional enzyme with both catalase and broad-spectrum peroxidase activity. The sequence is that of Catalase-peroxidase 1 from Shewanella amazonensis (strain ATCC BAA-1098 / SB2B).